We begin with the raw amino-acid sequence, 372 residues long: Glutamate 5-kinase (372 aa).

Lys9 provides a ligand contact to ATP. Substrate contacts are provided by Ser49, Asp136, and Asn148. Residues 168-169 and 210-216 each bind ATP; these read TD and TGGMKSK. The PUA domain maps to 276 to 360; the sequence is EGKVFIDDGA…PAIEVIHRDS (85 aa).

Belongs to the glutamate 5-kinase family.

It is found in the cytoplasm. The catalysed reaction is L-glutamate + ATP = L-glutamyl 5-phosphate + ADP. It functions in the pathway amino-acid biosynthesis; L-proline biosynthesis; L-glutamate 5-semialdehyde from L-glutamate: step 1/2. Its function is as follows. Catalyzes the transfer of a phosphate group to glutamate to form L-glutamate 5-phosphate. This Oceanobacillus iheyensis (strain DSM 14371 / CIP 107618 / JCM 11309 / KCTC 3954 / HTE831) protein is Glutamate 5-kinase.